The chain runs to 81 residues: Defensin-like protein 144 (81 aa).

A signal peptide spans 1–24 (MKNSFRFSFTVITTFIICVLVSGA). Disulfide bonds link Cys-30–Cys-74, Cys-42–Cys-61, Cys-47–Cys-69, and Cys-51–Cys-71.

It belongs to the DEFL family.

It is found in the secreted. This chain is Defensin-like protein 144 (LCR10), found in Arabidopsis thaliana (Mouse-ear cress).